The chain runs to 37 residues: Large ribosomal subunit protein bL36c (37 aa).

The protein belongs to the bacterial ribosomal protein bL36 family.

The protein localises to the plastid. Its subcellular location is the chloroplast. The sequence is that of Large ribosomal subunit protein bL36c from Bigelowiella natans (Pedinomonas minutissima).